The chain runs to 508 residues: E3 ubiquitin-protein ligase XBAT32 (508 aa).

ANK repeat units lie at residues 50–79, 83–112, 117–147, 177–206, and 220–249; these read VRNS…DINL, RGQT…NIHR, NGGT…SVPN, GGIT…SVTQ, and AGST…CLAA. Residues 321–372 form an RING-type zinc finger; sequence CAVCLERKCTVAADGCAHEFCTNCALYLSTTSITSSKTSNVTPGSVPCPLCR.

As to quaternary structure, interacts with ACS4 and ACS7. As to expression, expressed in the vascular system of primary root, vascular tissue of leaves, stems and anthers.

The catalysed reaction is S-ubiquitinyl-[E2 ubiquitin-conjugating enzyme]-L-cysteine + [acceptor protein]-L-lysine = [E2 ubiquitin-conjugating enzyme]-L-cysteine + N(6)-ubiquitinyl-[acceptor protein]-L-lysine.. Its pathway is protein modification; protein ubiquitination. In terms of biological role, E3 ubiquitin-protein ligase that mediates ubiquitination of ACC synthases (ACS). Negatively regulates ethylene biosynthesis probably via ubiquitin-dependent degradation of ACS4 and ACS7 enzymes. Regulates lateral root formation and development by controlling ethylene production which inhibits lateral root formation at high concentration. The protein is E3 ubiquitin-protein ligase XBAT32 (XBAT32) of Arabidopsis thaliana (Mouse-ear cress).